Here is a 78-residue protein sequence, read N- to C-terminus: MSRVCQLTGKKANNAYAISHSHRRTKKLQQVNLQWKRVWWPEGKRWVRLRLSTKAIKTLERKGLSAFAKEAGLDLNKL.

It belongs to the bacterial ribosomal protein bL28 family.

The chain is Large ribosomal subunit protein bL28 from Thermosynechococcus vestitus (strain NIES-2133 / IAM M-273 / BP-1).